The chain runs to 89 residues: Small ribosomal subunit protein uS15 (89 aa).

Positions 1–23 are disordered; it reads MALTKERTASVVQQYGSGEKDTG.

It belongs to the universal ribosomal protein uS15 family. Part of the 30S ribosomal subunit. Forms a bridge to the 50S subunit in the 70S ribosome, contacting the 23S rRNA.

In terms of biological role, one of the primary rRNA binding proteins, it binds directly to 16S rRNA where it helps nucleate assembly of the platform of the 30S subunit by binding and bridging several RNA helices of the 16S rRNA. Forms an intersubunit bridge (bridge B4) with the 23S rRNA of the 50S subunit in the ribosome. This chain is Small ribosomal subunit protein uS15, found in Treponema pallidum (strain Nichols).